The sequence spans 176 residues: Urease accessory protein UreE (176 aa).

A disordered region spans residues 147–176; that stretch reads AGAYQQGGGHSHGHAHSHSHEKPHSHTHNH.

It belongs to the UreE family.

The protein resides in the cytoplasm. Functionally, involved in urease metallocenter assembly. Binds nickel. Probably functions as a nickel donor during metallocenter assembly. The chain is Urease accessory protein UreE from Alcanivorax borkumensis (strain ATCC 700651 / DSM 11573 / NCIMB 13689 / SK2).